A 249-amino-acid polypeptide reads, in one-letter code: Ribonuclease 3 (249 aa).

The RNase III domain maps to 20–149 (FKKFQERISV…FIGALYLDQG (130 aa)). Glu62 lines the Mg(2+) pocket. Asp66 is an active-site residue. Mg(2+)-binding residues include Asp135 and Glu138. Residue Glu138 is part of the active site. Residues 175–244 (DFKSQLQEFV…AQEALAKLQK (70 aa)) enclose the DRBM domain. A disordered region spans residues 225–249 (RSKKEAEQHAAQEALAKLQKHHMKQ).

Belongs to the ribonuclease III family. As to quaternary structure, homodimer. Mg(2+) serves as cofactor.

The protein resides in the cytoplasm. The enzyme catalyses Endonucleolytic cleavage to 5'-phosphomonoester.. In terms of biological role, digests double-stranded RNA. Involved in the processing of primary rRNA transcript to yield the immediate precursors to the large and small rRNAs (23S and 16S). Processes some mRNAs, and tRNAs when they are encoded in the rRNA operon. Processes pre-crRNA and tracrRNA of type II CRISPR loci if present in the organism. The protein is Ribonuclease 3 of Bacillus licheniformis (strain ATCC 14580 / DSM 13 / JCM 2505 / CCUG 7422 / NBRC 12200 / NCIMB 9375 / NCTC 10341 / NRRL NRS-1264 / Gibson 46).